The following is a 219-amino-acid chain: ATP-dependent Clp protease proteolytic subunit 3 (219 aa).

The Nucleophile role is filled by Ser112. Residue His137 is part of the active site.

Belongs to the peptidase S14 family. In terms of assembly, fourteen ClpP subunits assemble into 2 heptameric rings which stack back to back to give a disk-like structure with a central cavity, resembling the structure of eukaryotic proteasomes.

It localises to the cytoplasm. The catalysed reaction is Hydrolysis of proteins to small peptides in the presence of ATP and magnesium. alpha-casein is the usual test substrate. In the absence of ATP, only oligopeptides shorter than five residues are hydrolyzed (such as succinyl-Leu-Tyr-|-NHMec, and Leu-Tyr-Leu-|-Tyr-Trp, in which cleavage of the -Tyr-|-Leu- and -Tyr-|-Trp bonds also occurs).. Its function is as follows. Cleaves peptides in various proteins in a process that requires ATP hydrolysis. Has a chymotrypsin-like activity. Plays a major role in the degradation of misfolded proteins. The chain is ATP-dependent Clp protease proteolytic subunit 3 from Streptomyces avermitilis (strain ATCC 31267 / DSM 46492 / JCM 5070 / NBRC 14893 / NCIMB 12804 / NRRL 8165 / MA-4680).